A 250-amino-acid chain; its full sequence is ANLLILQVSYAQKSSELVIGGDECNINEHRFLAFTYSRGFFCGGTLINQEWVLTATHCDRIFMRIYLGLHNQSVRYDDQQIRYPKEKYFFPCSKNFTKWDKDIMLIRLDRPVKNSEHIAPLSLPSNPPSVGSVCRVMGWGTITAPNDTYPDVPHCANINLFNYTVCRGAYKGLPATSRTLCAGVLQGGIDTCVGDSGGPLICNGQFQGIVFWGGDPCAQPRKPALYTKVFDHLHWILSIIAGNTTATCPP.

The signal sequence occupies residues 1–11; that stretch reads ANLLILQVSYA. A propeptide spanning residues 12-17 is cleaved from the precursor; it reads QKSSEL. The region spanning 18–241 is the Peptidase S1 domain; the sequence is VIGGDECNIN…HLHWILSIIA (224 aa). 5 cysteine pairs are disulfide-bonded: Cys24–Cys155, Cys42–Cys58, Cys134–Cys202, Cys166–Cys181, and Cys192–Cys217. The active-site Charge relay system is the His57. Asn71 and Asn95 each carry an N-linked (GlcNAc...) asparagine glycan. Residue Asp102 is the Charge relay system of the active site. Asn146 and Asn162 each carry an N-linked (GlcNAc...) asparagine glycan. Catalysis depends on Ser196, which acts as the Charge relay system. A glycan (N-linked (GlcNAc...) asparagine) is linked at Asn243.

It belongs to the peptidase S1 family. Snake venom subfamily. Monomer. In terms of tissue distribution, expressed by the venom gland.

It localises to the secreted. In terms of biological role, snake venom serine protease that may impair the hemostatic system of the prey. In Bothrops pictus (Desert lancehead), this protein is Snake venom serine protease pictobin.